The primary structure comprises 696 residues: Translation initiation factor IF-2 (696 aa).

The 175-residue stretch at 187–361 (ERPPVVTVMG…EMQEIKGIPD (175 aa)) folds into the tr-type G domain. Residues 196–203 (GHVDHGKT) are G1. GTP is bound at residue 196–203 (GHVDHGKT). The interval 221-225 (GITQS) is G2. The G3 stretch occupies residues 242 to 245 (DTPG). Residues 242 to 246 (DTPGH) and 296 to 299 (NKID) each bind GTP. The interval 296–299 (NKID) is G4. A G5 region spans residues 333-335 (SAK).

It belongs to the TRAFAC class translation factor GTPase superfamily. Classic translation factor GTPase family. IF-2 subfamily.

Its subcellular location is the cytoplasm. Its function is as follows. One of the essential components for the initiation of protein synthesis. Protects formylmethionyl-tRNA from spontaneous hydrolysis and promotes its binding to the 30S ribosomal subunits. Also involved in the hydrolysis of GTP during the formation of the 70S ribosomal complex. The polypeptide is Translation initiation factor IF-2 (Thermosipho africanus (strain TCF52B)).